The following is a 392-amino-acid chain: Cytochrome b (392 aa).

The next 4 helical transmembrane spans lie at 38–58 (FGSL…FLAM), 82–104 (WLLR…LHIF), 119–139 (VRCL…TGYV), and 185–205 (FFSL…LHLA). Residues histidine 88 and histidine 102 each coordinate heme b. Heme b contacts are provided by histidine 189 and histidine 203. Residue histidine 208 participates in a ubiquinone binding. 4 helical membrane-spanning segments follow: residues 231–251 (FYVK…IWIF), 295–315 (SGGV…PFFK), 327–347 (IHQG…WIGC), and 354–373 (FVTI…AITP).

This sequence belongs to the cytochrome b family. As to quaternary structure, the main subunits of complex b-c1 are: cytochrome b, cytochrome c1 and the Rieske protein. Heme b serves as cofactor.

Its subcellular location is the mitochondrion inner membrane. Functionally, component of the ubiquinol-cytochrome c reductase complex (complex III or cytochrome b-c1 complex) that is part of the mitochondrial respiratory chain. The b-c1 complex mediates electron transfer from ubiquinol to cytochrome c. Contributes to the generation of a proton gradient across the mitochondrial membrane that is then used for ATP synthesis. This is Cytochrome b (MT-CYB) from Vicia faba (Broad bean).